The sequence spans 113 residues: Phosphoribosyl-ATP pyrophosphatase (113 aa).

The protein belongs to the PRA-PH family.

It localises to the cytoplasm. It catalyses the reaction 1-(5-phospho-beta-D-ribosyl)-ATP + H2O = 1-(5-phospho-beta-D-ribosyl)-5'-AMP + diphosphate + H(+). Its pathway is amino-acid biosynthesis; L-histidine biosynthesis; L-histidine from 5-phospho-alpha-D-ribose 1-diphosphate: step 2/9. The sequence is that of Phosphoribosyl-ATP pyrophosphatase from Janthinobacterium sp. (strain Marseille) (Minibacterium massiliensis).